Consider the following 201-residue polypeptide: Imidazoleglycerol-phosphate dehydratase (201 aa).

Belongs to the imidazoleglycerol-phosphate dehydratase family.

It is found in the cytoplasm. It catalyses the reaction D-erythro-1-(imidazol-4-yl)glycerol 3-phosphate = 3-(imidazol-4-yl)-2-oxopropyl phosphate + H2O. Its pathway is amino-acid biosynthesis; L-histidine biosynthesis; L-histidine from 5-phospho-alpha-D-ribose 1-diphosphate: step 6/9. This is Imidazoleglycerol-phosphate dehydratase from Methanopyrus kandleri (strain AV19 / DSM 6324 / JCM 9639 / NBRC 100938).